A 379-amino-acid chain; its full sequence is Putative nucleosome assembly protein C2D10.11C (379 aa).

Over residues 1-10 the composition is skewed to basic and acidic residues; it reads MSKGPGDFKK. Disordered regions lie at residues 1-30 and 345-379; these read MSKG…DVHL and SDFN…EISD. Residues 16 to 28 are compositionally biased toward polar residues; that stretch reads AAQTPQNTPSSDV.

It belongs to the nucleosome assembly protein (NAP) family.

It is found in the nucleus. This chain is Putative nucleosome assembly protein C2D10.11C, found in Schizosaccharomyces pombe (strain 972 / ATCC 24843) (Fission yeast).